The following is a 119-amino-acid chain: Ribonuclease P protein component (119 aa).

The protein belongs to the RnpA family. Consists of a catalytic RNA component (M1 or rnpB) and a protein subunit.

The catalysed reaction is Endonucleolytic cleavage of RNA, removing 5'-extranucleotides from tRNA precursor.. Functionally, RNaseP catalyzes the removal of the 5'-leader sequence from pre-tRNA to produce the mature 5'-terminus. It can also cleave other RNA substrates such as 4.5S RNA. The protein component plays an auxiliary but essential role in vivo by binding to the 5'-leader sequence and broadening the substrate specificity of the ribozyme. This chain is Ribonuclease P protein component, found in Listeria welshimeri serovar 6b (strain ATCC 35897 / DSM 20650 / CCUG 15529 / CIP 8149 / NCTC 11857 / SLCC 5334 / V8).